Reading from the N-terminus, the 462-residue chain is Na(+)/H(+) antiporter NhaA 2 (462 aa).

The interval 1 to 31 (MKSSTREQTPVTSPTPHDPTPPTPPRGSTPL) is disordered. A compositionally biased stretch (pro residues) spans 16 to 27 (PHDPTPPTPPRG). 11 helical membrane passes run 52-72 (IGGA…NSPW), 96-116 (LTLG…IAGL), 134-154 (LVPV…YVLV), 165-185 (GWAI…AVIS), 195-215 (FLLT…AIFY), 218-238 (TLAV…GLLV), 244-264 (SWWL…ASGI), 309-329 (FAVP…LSGL), 337-357 (VALG…LGAT), 382-402 (LLGG…FGAG), and 408-428 (HVKV…AVVL).

It belongs to the NhaA Na(+)/H(+) (TC 2.A.33) antiporter family.

The protein resides in the cell membrane. It carries out the reaction Na(+)(in) + 2 H(+)(out) = Na(+)(out) + 2 H(+)(in). Its function is as follows. Na(+)/H(+) antiporter that extrudes sodium in exchange for external protons. In Kineococcus radiotolerans (strain ATCC BAA-149 / DSM 14245 / SRS30216), this protein is Na(+)/H(+) antiporter NhaA 2.